A 112-amino-acid polypeptide reads, in one-letter code: Signal peptidase complex-like protein DTM1 (112 aa).

The N-terminal stretch at 1–25 is a signal peptide; it reads MGRDEMLRRSLVALAAAVVVTGVVT. 2 helical membrane passes run 33–53 and 92–112; these read ATYGFGILAIAGVLLPDWEFF and MAMLTTIYGFGLYKWWMYVSS.

It belongs to the SPCS1 family.

The protein resides in the endoplasmic reticulum membrane. Its function is as follows. Functions in tapetum development during early meiosis. May play a role in the endoplasmic reticulum (ER) membrane in the early stages of tapetum development in anthers. Seems to function after MSP1 and before UDT1. The polypeptide is Signal peptidase complex-like protein DTM1 (Oryza sativa subsp. japonica (Rice)).